We begin with the raw amino-acid sequence, 957 residues long: Glycine dehydrogenase (decarboxylating) (957 aa).

Lysine 708 is modified (N6-(pyridoxal phosphate)lysine).

This sequence belongs to the GcvP family. In terms of assembly, the glycine cleavage system is composed of four proteins: P, T, L and H. The cofactor is pyridoxal 5'-phosphate.

It catalyses the reaction N(6)-[(R)-lipoyl]-L-lysyl-[glycine-cleavage complex H protein] + glycine + H(+) = N(6)-[(R)-S(8)-aminomethyldihydrolipoyl]-L-lysyl-[glycine-cleavage complex H protein] + CO2. Functionally, the glycine cleavage system catalyzes the degradation of glycine. The P protein binds the alpha-amino group of glycine through its pyridoxal phosphate cofactor; CO(2) is released and the remaining methylamine moiety is then transferred to the lipoamide cofactor of the H protein. The sequence is that of Glycine dehydrogenase (decarboxylating) from Salmonella heidelberg (strain SL476).